A 226-amino-acid polypeptide reads, in one-letter code: Phosphoglycolate phosphatase (226 aa).

D12 acts as the Nucleophile in catalysis. 3 residues coordinate Mg(2+): D12, D14, and D177.

The protein belongs to the HAD-like hydrolase superfamily. CbbY/CbbZ/Gph/YieH family. Mg(2+) serves as cofactor.

The catalysed reaction is 2-phosphoglycolate + H2O = glycolate + phosphate. It participates in organic acid metabolism; glycolate biosynthesis; glycolate from 2-phosphoglycolate: step 1/1. Functionally, specifically catalyzes the dephosphorylation of 2-phosphoglycolate. Is involved in the dissimilation of the intracellular 2-phosphoglycolate formed during the DNA repair of 3'-phosphoglycolate ends, a major class of DNA lesions induced by oxidative stress. The polypeptide is Phosphoglycolate phosphatase (Colwellia psychrerythraea (strain 34H / ATCC BAA-681) (Vibrio psychroerythus)).